The primary structure comprises 401 residues: Keratin-associated protein 10-4 (401 aa).

Tandem repeats lie at residues 36–40 (CCEPP), 41–45 (CCAPS), 46–50 (CCAPA), 67–71 (CCPVT), 89–93 (CCQQS), 99–103 (CCASS), 109–113 (CCVPV), 114–118 (CCKTV), 119–123 (CCKPV), 124–128 (CCVPV), 129–133 (CCGDS), 135–139 (CCQQS), 145–149 (CCTSS), 155–159 (CCVPI), 160–164 (CCKPV), 172–176 (CCQQS), 186–190 (CCQAV), 208–212 (CCQQS), 218–222 (CCTSS), 228–232 (CCVPV), 233–237 (CCKTV), 238–242 (CCKPV), 250–254 (CCQQS), 270–274 (CCVPV), 275–279 (CCKPV), 280–284 (CCKPV), 297–301 (CCQQS), 307–311 (CCTSS), 317–321 (CCVPV), 322–326 (CCKPV), 339–343 (CCQQS), 349–353 (CCTTS), 354–358 (CCRPS), 373–377 (CCVPV), and 391–395 (CCRPA). The tract at residues 36–395 (CCEPPCCAPS…SCQPSCCRPA (360 aa)) is 36 X 5 AA repeats of C-C-X(3).

This sequence belongs to the KRTAP type 10 family. In terms of assembly, interacts with hair keratins. Restricted to hair root, not detected in any other tissues.

Functionally, in the hair cortex, hair keratin intermediate filaments are embedded in an interfilamentous matrix, consisting of hair keratin-associated proteins (KRTAP), which are essential for the formation of a rigid and resistant hair shaft through their extensive disulfide bond cross-linking with abundant cysteine residues of hair keratins. The matrix proteins include the high-sulfur and high-glycine-tyrosine keratins. The polypeptide is Keratin-associated protein 10-4 (KRTAP10-4) (Homo sapiens (Human)).